Reading from the N-terminus, the 177-residue chain is MSRVAKNPVAIPQGVEITIGADEVSVKGPLGAVKQYIGNAVTLERDGDALVCKAREGVANSRAMSGTVRALVNNMVTGVTKGFERKLTLVGVGYRAQAQGDKLNLTLGFSHPVVHQMPAGVKVETPTQTEIVIKGIDKQQVGQVAAEVRAYREPEPYKGKGVRYSDEVVVLKETKKK.

It belongs to the universal ribosomal protein uL6 family. In terms of assembly, part of the 50S ribosomal subunit.

Its function is as follows. This protein binds to the 23S rRNA, and is important in its secondary structure. It is located near the subunit interface in the base of the L7/L12 stalk, and near the tRNA binding site of the peptidyltransferase center. In Aromatoleum aromaticum (strain DSM 19018 / LMG 30748 / EbN1) (Azoarcus sp. (strain EbN1)), this protein is Large ribosomal subunit protein uL6.